The sequence spans 327 residues: Putative ABC transporter ATP-binding protein MM_0887 (327 aa).

Residues 1 to 44 (MSKSTPLKSSIIRADLPEQAEGRTGPETGKDPEKTGNSEGKTDT) are disordered. The span at 28–44 (TGKDPEKTGNSEGKTDT) shows a compositional bias: basic and acidic residues. In terms of domain architecture, ABC transporter spans 47-282 (IEIKDLCHRY…PALLRKAHLR (236 aa)). Residue 81–88 (GANGAGKS) coordinates ATP.

Belongs to the ABC transporter superfamily.

Its subcellular location is the cell membrane. Functionally, probably part of an ABC transporter complex. Responsible for energy coupling to the transport system. This is Putative ABC transporter ATP-binding protein MM_0887 from Methanosarcina mazei (strain ATCC BAA-159 / DSM 3647 / Goe1 / Go1 / JCM 11833 / OCM 88) (Methanosarcina frisia).